A 201-amino-acid chain; its full sequence is Glycerol-3-phosphate acyltransferase (201 aa).

A run of 5 helical transmembrane segments spans residues L3–L23, W53–G73, H80–F100, I115–F135, and F153–Y175.

It belongs to the PlsY family. In terms of assembly, probably interacts with PlsX.

Its subcellular location is the cell inner membrane. It catalyses the reaction an acyl phosphate + sn-glycerol 3-phosphate = a 1-acyl-sn-glycero-3-phosphate + phosphate. It functions in the pathway lipid metabolism; phospholipid metabolism. Its function is as follows. Catalyzes the transfer of an acyl group from acyl-phosphate (acyl-PO(4)) to glycerol-3-phosphate (G3P) to form lysophosphatidic acid (LPA). This enzyme utilizes acyl-phosphate as fatty acyl donor, but not acyl-CoA or acyl-ACP. This Pasteurella multocida (strain Pm70) protein is Glycerol-3-phosphate acyltransferase.